Consider the following 502-residue polypeptide: ATP synthase subunit alpha (502 aa).

169-176 (GDRQTGKT) serves as a coordination point for ATP.

The protein belongs to the ATPase alpha/beta chains family. As to quaternary structure, F-type ATPases have 2 components, CF(1) - the catalytic core - and CF(0) - the membrane proton channel. CF(1) has five subunits: alpha(3), beta(3), gamma(1), delta(1), epsilon(1). CF(0) has three main subunits: a(1), b(2) and c(9-12). The alpha and beta chains form an alternating ring which encloses part of the gamma chain. CF(1) is attached to CF(0) by a central stalk formed by the gamma and epsilon chains, while a peripheral stalk is formed by the delta and b chains.

The protein resides in the cell membrane. The enzyme catalyses ATP + H2O + 4 H(+)(in) = ADP + phosphate + 5 H(+)(out). Produces ATP from ADP in the presence of a proton gradient across the membrane. The alpha chain is a regulatory subunit. The sequence is that of ATP synthase subunit alpha from Desulfitobacterium hafniense (strain DSM 10664 / DCB-2).